The following is a 229-amino-acid chain: Uracil-DNA glycosylase (229 aa).

Residue D64 is the Proton acceptor of the active site.

The protein belongs to the uracil-DNA glycosylase (UDG) superfamily. UNG family.

The protein resides in the cytoplasm. The enzyme catalyses Hydrolyzes single-stranded DNA or mismatched double-stranded DNA and polynucleotides, releasing free uracil.. Excises uracil residues from the DNA which can arise as a result of misincorporation of dUMP residues by DNA polymerase or due to deamination of cytosine. The chain is Uracil-DNA glycosylase from Escherichia coli O7:K1 (strain IAI39 / ExPEC).